The sequence spans 66 residues: U1-theraphotoxin-Cg1b (66 aa).

The N-terminal stretch at 1-21 (MKTSALFVIFGLVLLFCNSFA) is a signal peptide. Residues 22–29 (AELKTTGR) constitute a propeptide that is removed on maturation. Cystine bridges form between Cys31-Cys46, Cys38-Cys51, and Cys45-Cys58.

This sequence belongs to the neurotoxin 10 (Hwtx-1) family. 46 (Jztx-7/10/12) subfamily. In terms of tissue distribution, expressed by the venom gland.

The protein resides in the secreted. Its function is as follows. Probable ion channel inhibitor. The sequence is that of U1-theraphotoxin-Cg1b from Chilobrachys guangxiensis (Chinese earth tiger tarantula).